Consider the following 82-residue polypeptide: Acyl carrier protein (82 aa).

A Carrier domain is found at 3–78; the sequence is QEIFERVKKV…KAVEHISEKV (76 aa). S38 carries the post-translational modification O-(pantetheine 4'-phosphoryl)serine.

It belongs to the acyl carrier protein (ACP) family. In terms of processing, 4'-phosphopantetheine is transferred from CoA to a specific serine of apo-ACP by AcpS. This modification is essential for activity because fatty acids are bound in thioester linkage to the sulfhydryl of the prosthetic group.

It is found in the cytoplasm. It functions in the pathway lipid metabolism; fatty acid biosynthesis. In terms of biological role, carrier of the growing fatty acid chain in fatty acid biosynthesis. This Gloeothece citriformis (strain PCC 7424) (Cyanothece sp. (strain PCC 7424)) protein is Acyl carrier protein.